The chain runs to 101 residues: Small ribosomal subunit protein uS14 (101 aa).

The disordered stretch occupies residues 1 to 26 (MAKVSSIKKNESRKKKSQSLHNKRSA). Residues 11–26 (ESRKKKSQSLHNKRSA) are compositionally biased toward basic residues.

This sequence belongs to the universal ribosomal protein uS14 family. As to quaternary structure, part of the 30S ribosomal subunit. Contacts proteins S3 and S10.

Functionally, binds 16S rRNA, required for the assembly of 30S particles and may also be responsible for determining the conformation of the 16S rRNA at the A site. The sequence is that of Small ribosomal subunit protein uS14 from Rickettsia felis (strain ATCC VR-1525 / URRWXCal2) (Rickettsia azadi).